We begin with the raw amino-acid sequence, 196 residues long: MLLSDVDIQAALEDKLIQIDPFDPQMLQPASLDIRLSRYFRLFNNHTYAYIDPAEPQEALTRLVEVAENQAFVLHPGEFILGSTCETVSLSNDLAARLEGKSSLGRLGLLTHSTAGFIDPGFSGQITLELGNVATLPIKLWPGMKIGQLCFFQLSSPAKNAYGSPVCASRYQGQRGPTASLSHQHFYRARFTEIGL.

DCTP contacts are provided by residues 101–106 (KSSLGR), Asp-119, 127–129 (TLE), Gln-148, Tyr-162, and Gln-174. Glu-129 serves as the catalytic Proton donor/acceptor.

The protein belongs to the dCTP deaminase family. In terms of assembly, homotrimer.

It carries out the reaction dCTP + 2 H2O = dUMP + NH4(+) + diphosphate. It participates in pyrimidine metabolism; dUMP biosynthesis; dUMP from dCTP: step 1/1. Its function is as follows. Bifunctional enzyme that catalyzes both the deamination of dCTP to dUTP and the hydrolysis of dUTP to dUMP without releasing the toxic dUTP intermediate. This chain is dCTP deaminase, dUMP-forming, found in Tropheryma whipplei (strain TW08/27) (Whipple's bacillus).